We begin with the raw amino-acid sequence, 844 residues long: Receptor-like protein 49 (844 aa).

A signal peptide spans 1–31; the sequence is MMYSCRERRMITVKWSLCLIFCLSNSILVFA. Residues 32–803 are Extracellular-facing; that stretch reads KHLCLPDQRD…QDEEKEEEEQ (772 aa). N-linked (GlcNAc...) asparagine glycans are attached at residues Asn59, Asn95, Asn112, and Asn159. LRR repeat units lie at residues 102–126, 136–160, 161–183, 185–208, 209–231, 242–265, 266–290, 292–313, 315–339, 345–362, 363–385, 386–409, 410–434, 436–457, 458–481, 482–504, 506–527, 528–551, 553–574, 575–601, 602–625, 665–689, 690–713, 714–737, and 739–762; these read QHLQ…GLKG, LKYL…LGNL, SYLT…SMGN, NYLR…LGNL, SYLA…SMGN, LNSL…NMSS, LSKL…LFMI, SLVE…NISS, SKLQ…IFSP, YLDV…VSLP, SPIE…LRNQ, TKLY…LWSL, PELQ…VIQG, GELY…LLPV, DSMN…ICEL, DNLV…CFEN, HLYV…EAIS, DRLQ…LINC, ALEF…WLEL, LPNF…SLSF, PRLR…YFAP, FTIY…ISLL, KELI…LSNL, SNLQ…LGEL, and FLAR…QIQT. N-linked (GlcNAc...) asparagine glycosylation occurs at Asn207. Asn262 carries N-linked (GlcNAc...) asparagine glycosylation. Residue Asn310 is glycosylated (N-linked (GlcNAc...) asparagine). Asn374 and Asn384 each carry an N-linked (GlcNAc...) asparagine glycan. N-linked (GlcNAc...) asparagine glycosylation is present at Asn416. N-linked (GlcNAc...) asparagine glycans are attached at residues Asn493, Asn516, and Asn550. Residues Asn696 and Asn712 are each glycosylated (N-linked (GlcNAc...) asparagine). The N-linked (GlcNAc...) asparagine glycan is linked to Asn744. A helical membrane pass occupies residues 804 to 824; sequence VFSWIAAAIGYVPGVVCGLTI. Residues 825–844 are Cytoplasmic-facing; that stretch reads GHILVSHKRDWFMRIVSLFT.

Belongs to the RLP family.

Its subcellular location is the cell membrane. This chain is Receptor-like protein 49, found in Arabidopsis thaliana (Mouse-ear cress).